A 189-amino-acid polypeptide reads, in one-letter code: ADP-ribosylation factor H (189 aa).

GTP-binding positions include 34–40 (DGAGKST), 75–79 (DVGGQ), and 134–137 (NKQD).

The protein belongs to the small GTPase superfamily. Arf family.

Its subcellular location is the golgi apparatus. In terms of biological role, GTP-binding protein that may be involved in protein trafficking. May modulate vesicle budding and uncoating within the Golgi apparatus. The polypeptide is ADP-ribosylation factor H (arrH) (Dictyostelium discoideum (Social amoeba)).